A 48-amino-acid polypeptide reads, in one-letter code: U-actitoxin-Cgg3 (48 aa).

3 disulfides stabilise this stretch: C5–C41, C7–C33, and C23–C42. S46 is subject to Serine amide. Positions 47-48 are cleaved as a propeptide — removed in mature form; it reads GR.

This sequence belongs to the sea anemone type 3 (BDS) potassium channel toxin family.

It is found in the secreted. In terms of biological role, neurotoxin that induces paralysis when injected into crabs. May function in antimicrobial activity as it displays inhibitory activity towards the B.licheniformis enzyme subtilisin A (SUBTA) and the recombinant S.maltophilia protease 1 (rStmPr1) enzyme. Also displays inhibitory activity against various proteases including the porcine pancreatic elastase (PPE) and proteinase K (PK). This Condylactis gigantea (Giant Caribbean anemone) protein is U-actitoxin-Cgg3.